The chain runs to 1012 residues: Structural polyprotein (1012 aa).

Residue Asp30 participates in a divalent metal cation binding. A Peptidase S50 domain is found at 513–755 (ADKGYEVVAN…AGRQYDLAMA (243 aa)). Ser652 acts as the Nucleophile in catalysis. Residue Lys692 is part of the active site. The disordered stretch occupies residues 971 to 1012 (EMKHRNPRRAPPKPKPKPNVPTQRPPGRLGRWIRAVSDEDLE). A compositionally biased stretch (basic residues) spans 975–986 (RNPRRAPPKPKP). The segment at 1003–1012 (IRAVSDEDLE) is interaction with VP1 protein.

Homotrimer. A central divalent metal stabilizes the VP2 trimer. Interacts with host ITGA4/ITGB1. As to quaternary structure, homodimer. Interacts (via C-terminus) with VP1 in the cytoplasm. Interacts with VP2. In terms of processing, specific enzymatic cleavages yield mature proteins. The capsid assembly seems to be regulated by polyprotein processing. The protease VP4 cleaves itself off the polyprotein, thus releasing pre-VP2 and VP3 within the infected cell. During capsid assembly, the C-terminus of pre-VP2 is further processed by VP4, giving rise to VP2, the external capsid protein and three small peptides that all stay closely associated with the capsid.

Its subcellular location is the virion. It localises to the host cytoplasm. Capsid protein VP2 self assembles to form an icosahedral capsid with a T=13 symmetry, about 70 nm in diameter, and consisting of 260 VP2 trimers. The capsid encapsulates the genomic dsRNA. VP2 is also involved in attachment and entry into the host cell by interacting with host ITGA4/ITGB1. Its function is as follows. The precursor of VP2 plays an important role in capsid assembly. First, pre-VP2 and VP2 oligomers assemble to form a procapsid. Then, the pre-VP2 intermediates may be processed into VP2 proteins by proteolytic cleavage mediated by VP4 to obtain the mature virion. The final capsid is composed of pentamers and hexamers but VP2 has a natural tendency to assemble into all-pentameric structures. Therefore pre-VP2 may be required to allow formation of the hexameric structures. In terms of biological role, protease VP4 is a serine protease that cleaves the polyprotein into its final products. Pre-VP2 is first partially cleaved, and may be completely processed by VP4 upon capsid maturation. Functionally, capsid protein VP3 plays a key role in virion assembly by providing a scaffold for the capsid made of VP2. May self-assemble to form a T=4-like icosahedral inner-capsid composed of at least 180 trimers. Plays a role in genomic RNA packaging by recruiting VP1 into the capsid and interacting with the dsRNA genome segments to form a ribonucleoprotein complex. Additionally, the interaction of the VP3 C-terminal tail with VP1 removes the inherent structural blockade of the polymerase active site. Thus, VP3 can also function as a transcriptional activator. Structural peptide 1 is a small peptide derived from pre-VP2 C-terminus. It destabilizes and perforates cell membranes, suggesting a role during entry. Its function is as follows. Structural peptide 2 is a small peptide derived from pre-VP2 C-terminus. It is not essential for the virus viability, but viral growth is affected when missing. In terms of biological role, structural peptide 3 is a small peptide derived from pre-VP2 C-terminus. It is not essential for the virus viability, but viral growth is affected when missing. This is Structural polyprotein from Avian infectious bursal disease virus (isolate Chicken/UK/UK661/1989) (IBDV).